The sequence spans 1679 residues: GRIP and coiled-coil domain-containing protein 2 (1679 aa).

Methionine 1 carries the post-translational modification N-acetylmethionine. Disordered stretches follow at residues 1–23 and 1466–1522; these read MEDS…KLET and LKSE…SAGT. Residues 35 to 1469 adopt a coiled-coil conformation; that stretch reads KQMMLLQKAK…ETQLFQLKSE (1435 aa). Phosphoserine is present on residues serine 1474 and serine 1478. Residues 1474 to 1483 show a composition bias toward polar residues; that stretch reads SPASSHQPSK. The tract at residues 1569 to 1608 is mediates interaction with RAB6A; it reads HLNGLLRETEATNAILMEQIKLLKSEIRRLERNQEREKSV. Residues 1569 to 1679 form a mediates interaction with RAB9A region; that stretch reads HLNGLLRETE…SYLHSWSGLR (111 aa). In terms of domain architecture, GRIP spans 1604–1654; the sequence is REKSVANLEYLKNVLLRFIFLKPGSERERLLPVIDTMLQLSPEEKGKLATV.

In terms of assembly, homodimer. Interacts (via GRIP domain) with RAB6A (preferentially in its GTP-bound form). May interact (RAB6A-dependent) with ARL1; might be involved in GCC2 Golgi localization. Interacts with CLASP1 and CLASP2; recruits both proteins to membranes of the TGN. Interacts with STX16. Interacts (probably via GRIP domain) with RAB9A (preferentially in its GTP-bound form).

It is found in the cytoplasm. It localises to the golgi apparatus. The protein resides in the trans-Golgi network membrane. Golgin which probably tethers transport vesicles to the trans-Golgi network (TGN) and regulates vesicular transport between the endosomes and the Golgi. As a RAB9A effector it is involved in recycling of the mannose 6-phosphate receptor from the late endosomes to the TGN. May also play a role in transport between the recycling endosomes and the Golgi. Required for maintenance of the Golgi structure, it is involved in the biogenesis of noncentrosomal, Golgi-associated microtubules through recruitment of CLASP1 and CLASP2. The sequence is that of GRIP and coiled-coil domain-containing protein 2 (Gcc2) from Rattus norvegicus (Rat).